The chain runs to 181 residues: NADH-quinone oxidoreductase subunit B (181 aa).

The [4Fe-4S] cluster site is built by Cys45, Cys46, Cys111, and Cys140.

It belongs to the complex I 20 kDa subunit family. In terms of assembly, NDH-1 is composed of 15 different subunits. Subunits NuoB, C, D, E, F, and G constitute the peripheral sector of the complex. Requires [4Fe-4S] cluster as cofactor.

The protein localises to the cell membrane. It catalyses the reaction a quinone + NADH + 5 H(+)(in) = a quinol + NAD(+) + 4 H(+)(out). NDH-1 shuttles electrons from NADH, via FMN and iron-sulfur (Fe-S) centers, to quinones in the respiratory chain. The immediate electron acceptor for the enzyme in this species is believed to be a menaquinone. Couples the redox reaction to proton translocation (for every two electrons transferred, four hydrogen ions are translocated across the cytoplasmic membrane), and thus conserves the redox energy in a proton gradient. The polypeptide is NADH-quinone oxidoreductase subunit B (Deinococcus radiodurans (strain ATCC 13939 / DSM 20539 / JCM 16871 / CCUG 27074 / LMG 4051 / NBRC 15346 / NCIMB 9279 / VKM B-1422 / R1)).